Reading from the N-terminus, the 304-residue chain is N-acetylmuramic acid 6-phosphate etherase (304 aa).

The SIS domain maps to Ile-58 to Lys-221. Catalysis depends on Glu-86, which acts as the Proton donor. The active site involves Glu-117.

The protein belongs to the GCKR-like family. MurNAc-6-P etherase subfamily. In terms of assembly, homodimer.

It catalyses the reaction N-acetyl-D-muramate 6-phosphate + H2O = N-acetyl-D-glucosamine 6-phosphate + (R)-lactate. Its pathway is amino-sugar metabolism; N-acetylmuramate degradation. Specifically catalyzes the cleavage of the D-lactyl ether substituent of MurNAc 6-phosphate, producing GlcNAc 6-phosphate and D-lactate. The chain is N-acetylmuramic acid 6-phosphate etherase from Clostridioides difficile (strain 630) (Peptoclostridium difficile).